Consider the following 400-residue polypeptide: Dihydrolipoyllysine-residue succinyltransferase component of 2-oxoglutarate dehydrogenase complex (400 aa).

Positions 2–77 (GVKIIVPSLG…AVGEEIGDIN (76 aa)) constitute a Lipoyl-binding domain. Lys-43 carries the post-translational modification N6-lipoyllysine. The span at 85–97 (NSNEAAKPQTASQ) shows a compositional bias: polar residues. The tract at residues 85 to 113 (NSNEAAKPQTASQPVPEKVPKKPAVANNT) is disordered. Residues 113-150 (TLAPSVQKLVTENKLDPNNIKGTGKDGRITKGDVLETM) form the Peripheral subunit-binding (PSBD) domain. Catalysis depends on residues His-371 and Asp-375.

It belongs to the 2-oxoacid dehydrogenase family. In terms of assembly, forms a 24-polypeptide structural core with octahedral symmetry. Part of the 2-oxoglutarate dehydrogenase (OGDH) complex composed of E1 (2-oxoglutarate dehydrogenase), E2 (dihydrolipoamide succinyltransferase) and E3 (dihydrolipoamide dehydrogenase); the complex contains multiple copies of the three enzymatic components (E1, E2 and E3). The cofactor is (R)-lipoate.

The enzyme catalyses N(6)-[(R)-dihydrolipoyl]-L-lysyl-[protein] + succinyl-CoA = N(6)-[(R)-S(8)-succinyldihydrolipoyl]-L-lysyl-[protein] + CoA. It participates in amino-acid degradation; L-lysine degradation via saccharopine pathway; glutaryl-CoA from L-lysine: step 6/6. In terms of biological role, E2 component of the 2-oxoglutarate dehydrogenase (OGDH) complex which catalyzes the second step in the conversion of 2-oxoglutarate to succinyl-CoA and CO(2). This Rickettsia bellii (strain RML369-C) protein is Dihydrolipoyllysine-residue succinyltransferase component of 2-oxoglutarate dehydrogenase complex (sucB).